We begin with the raw amino-acid sequence, 289 residues long: Pantothenate synthetase (289 aa).

30–37 (MGNLHEGH) is a binding site for ATP. His-37 acts as the Proton donor in catalysis. Gln-61 contacts (R)-pantoate. Gln-61 provides a ligand contact to beta-alanine. ATP is bound at residue 149-152 (GEKD). A (R)-pantoate-binding site is contributed by Gln-155. ATP is bound at residue 186 to 189 (MSSR).

This sequence belongs to the pantothenate synthetase family. As to quaternary structure, homodimer.

The protein localises to the cytoplasm. The catalysed reaction is (R)-pantoate + beta-alanine + ATP = (R)-pantothenate + AMP + diphosphate + H(+). It functions in the pathway cofactor biosynthesis; (R)-pantothenate biosynthesis; (R)-pantothenate from (R)-pantoate and beta-alanine: step 1/1. Functionally, catalyzes the condensation of pantoate with beta-alanine in an ATP-dependent reaction via a pantoyl-adenylate intermediate. The chain is Pantothenate synthetase from Psychromonas ingrahamii (strain DSM 17664 / CCUG 51855 / 37).